The chain runs to 156 residues: Transcription elongation factor GreA (156 aa).

Positions 46-67 form a coiled coil; sequence AEYHAAREKQSFIEGRIKELEA.

Belongs to the GreA/GreB family.

In terms of biological role, necessary for efficient RNA polymerase transcription elongation past template-encoded arresting sites. The arresting sites in DNA have the property of trapping a certain fraction of elongating RNA polymerases that pass through, resulting in locked ternary complexes. Cleavage of the nascent transcript by cleavage factors such as GreA or GreB allows the resumption of elongation from the new 3'terminus. GreA releases sequences of 2 to 3 nucleotides. In Cereibacter sphaeroides (strain ATCC 17029 / ATH 2.4.9) (Rhodobacter sphaeroides), this protein is Transcription elongation factor GreA.